A 237-amino-acid polypeptide reads, in one-letter code: Phosphoribosylaminoimidazole-succinocarboxamide synthase (237 aa).

It belongs to the SAICAR synthetase family.

It catalyses the reaction 5-amino-1-(5-phospho-D-ribosyl)imidazole-4-carboxylate + L-aspartate + ATP = (2S)-2-[5-amino-1-(5-phospho-beta-D-ribosyl)imidazole-4-carboxamido]succinate + ADP + phosphate + 2 H(+). It participates in purine metabolism; IMP biosynthesis via de novo pathway; 5-amino-1-(5-phospho-D-ribosyl)imidazole-4-carboxamide from 5-amino-1-(5-phospho-D-ribosyl)imidazole-4-carboxylate: step 1/2. The polypeptide is Phosphoribosylaminoimidazole-succinocarboxamide synthase (Listeria innocua serovar 6a (strain ATCC BAA-680 / CLIP 11262)).